Consider the following 468-residue polypeptide: Immunoglobulin superfamily member 21 (468 aa).

Positions 1–24 (MQAAPSLRRASCLLLAAILDLARG) are cleaved as a signal peptide. One can recognise an Ig-like 1 domain in the interval 25 to 132 (YLTVNIEPLP…RATREKVVLA (108 aa)). C46 and C116 form a disulfide bridge. N-linked (GlcNAc...) asparagine glycosylation is found at N82, N165, and N407. The 86-residue stretch at 344-429 (PKIMMTPSRA…GSTDTHTRLI (86 aa)) folds into the Ig-like 2 domain.

Interacts (Ig-like 1 domain) with NRXN2 (via Laminin G-like 1 domain) in a trans-interaction manner. Expressed in brain (at protein levels). Highly expressed in the pyramidal cell layer of the dorsal and ventral hippocampal CA1 and CA3 regions, layers 5 and 6 of the cortex, the thalamus and the pons and weakly expressed in the cerebellum. Expressed in neurons but not in glia.

The protein localises to the postsynaptic cell membrane. Its function is as follows. Involved in synaptic inhibition in the brain. Selectively regulates inhibitory presynaptic differentiation through interacting with presynaptic NRXN2. This is Immunoglobulin superfamily member 21 (Igsf21) from Mus musculus (Mouse).